A 548-amino-acid polypeptide reads, in one-letter code: Solute carrier family 22 member 7 (548 aa).

12 helical membrane-spanning segments follow: residues 21–41, 146–166, 180–200, 204–224, 234–254, 259–279, 346–366, 376–397, 404–423, 432–452, 466–486, and 493–513; these read VALL…PIFL, AAST…GYLS, VSTL…MFAI, LTGS…LEWL, VLSS…GYLI, WLLL…WWVP, ISLC…GLSL, YQTQ…YLSV, LTQA…RLLV, TVLA…AYLF, MGLT…AALL, and LPKL…LLLP. The interval 522-548 is disordered; the sequence is ETIQDVERKSAPTSLQEEEMPMKQVQN.

The protein belongs to the major facilitator (TC 2.A.1) superfamily. Organic cation transporter (TC 2.A.1.19) family.

The protein resides in the basolateral cell membrane. It localises to the apical cell membrane. Its subcellular location is the cell membrane. The enzyme catalyses orotate(out) + L-glutamate(in) = orotate(in) + L-glutamate(out). The catalysed reaction is 3',5'-cyclic GMP(in) = 3',5'-cyclic GMP(out). It carries out the reaction GMP(in) = GMP(out). It catalyses the reaction 2'-deoxyguanosine(in) = 2'-deoxyguanosine(out). The enzyme catalyses GDP(in) = GDP(out). The catalysed reaction is guanosine(in) = guanosine(out). It carries out the reaction GTP(in) = GTP(out). It catalyses the reaction 3',5'-cyclic AMP(in) = 3',5'-cyclic AMP(out). The enzyme catalyses creatinine(in) = creatinine(out). The catalysed reaction is prostaglandin E2(out) = prostaglandin E2(in). It carries out the reaction 2-oxoglutarate(in) = 2-oxoglutarate(out). It catalyses the reaction glutarate(in) = glutarate(out). The enzyme catalyses urate(out) = urate(in). The catalysed reaction is estrone 3-sulfate(out) = estrone 3-sulfate(in). Its function is as follows. Functions as a Na(+)-independent bidirectional multispecific transporter. Contributes to the renal and hepatic elimination of endogenous organic compounds from the systemic circulation into the urine and bile, respectively. Capable of transporting a wide range of purine and pyrimidine nucleobases, nucleosides and nucleotides, with cGMP, 2'deoxyguanosine and GMP being the preferred substrates. Functions as a pH- and chloride-independent cGMP bidirectional facilitative transporter that can regulate both intracellular and extracellular levels of cGMP and may be involved in cGMP signaling pathways. Mediates orotate/glutamate bidirectional exchange and most likely display a physiological role in hepatic release of glutamate into the blood. Involved in renal secretion and possible reabsorption of creatinine. Able to uptake prostaglandin E2 (PGE2) and may contribute to PGE2 renal excretion. Also transports alpha-ketoglutarate and urate. Apart from the orotate/glutamate exchange, the counterions for the uptake of other SLC22A7/OAT2 substrates remain to be identified. The chain is Solute carrier family 22 member 7 (SLC22A7) from Pongo abelii (Sumatran orangutan).